A 499-amino-acid chain; its full sequence is Putative alpha-galactosidase 8 (499 aa).

Asn-154 and Asn-191 each carry an N-linked (GlcNAc...) asparagine glycan. Residue Asp-238 is the Nucleophile of the active site. N-linked (GlcNAc...) asparagine glycosylation occurs at Asn-256. The active-site Proton donor is Asp-303.

This sequence belongs to the glycosyl hydrolase 27 family.

It localises to the secreted. The enzyme catalyses Hydrolysis of terminal, non-reducing alpha-D-galactose residues in alpha-D-galactosides, including galactose oligosaccharides, galactomannans and galactolipids.. Functionally, putative alpha-galactosidase involved in the degradation of simple oligosaccharides like melibiose, raffinose and stachyose, and of polymeric galacto(gluco)mannans. The sequence is that of Putative alpha-galactosidase 8 (agl8) from Emericella nidulans (strain FGSC A4 / ATCC 38163 / CBS 112.46 / NRRL 194 / M139) (Aspergillus nidulans).